The primary structure comprises 355 residues: Cyclic nucleotide-gated potassium channel mll3241 (355 aa).

The Cytoplasmic portion of the chain corresponds to 1–12 (MSVLPFLRIYAP). A helical membrane pass occupies residues 13-30 (LNAVLAAPGLLAVAALTI). Over 31 to 38 (PDMSGRSR) the chain is Periplasmic. A helical membrane pass occupies residues 39–61 (LALAALLAVIWGAYLLQLAATLL). At 62 to 74 (KRRAGVVRDRTPK) the chain is on the cytoplasmic side. Residues 75 to 94 (IAIDVLAVLVPLAAFLLDGS) traverse the membrane as a helical segment. A helical membrane pass occupies residues 95-112 (PDWSLYCAVWLLKPLRDS). Topologically, residues 113–129 (TFFPVLGRVLANEARNL) are cytoplasmic. The chain crosses the membrane as a helical span at residues 130–150 (IGVTTLFGVVLFAVALAAYVI). Topologically, residues 151-161 (ERDIQPEKFGS) are periplasmic. Residues 162–180 (IPQAMWWAVVTLSTTGYGD) constitute an intramembrane region (pore-forming). Residues 175–180 (TTGYGD) carry the Selectivity filter motif. Residues 181 to 185 (TIPQS) lie on the Periplasmic side of the membrane. Residues 186–210 (FAGRVLAGAVMMSGIGIFGLWAGIL) traverse the membrane as a helical segment. Topologically, residues 211–355 (ATGFYQEVRR…LERRGAAASA (145 aa)) are cytoplasmic. 3',5'-cyclic AMP-binding positions include 297 to 298 (GE), 307 to 308 (RS), and arginine 348.

This sequence belongs to the potassium channel family. As to quaternary structure, homotetramer.

The protein localises to the cell membrane. Cyclic nucleotide-regulated potassium channel activated by cAMP. The sequence is that of Cyclic nucleotide-gated potassium channel mll3241 from Mesorhizobium japonicum (strain LMG 29417 / CECT 9101 / MAFF 303099) (Mesorhizobium loti (strain MAFF 303099)).